The following is a 489-amino-acid chain: Cobyric acid synthase (489 aa).

The region spanning 252–441 is the GATase cobBQ-type domain; sequence ALTIGVIQLP…IHGIFANTEF (190 aa). The active-site Nucleophile is Cys-330. The active site involves His-433.

It belongs to the CobB/CobQ family. CobQ subfamily.

The protein operates within cofactor biosynthesis; adenosylcobalamin biosynthesis. Its function is as follows. Catalyzes amidations at positions B, D, E, and G on adenosylcobyrinic A,C-diamide. NH(2) groups are provided by glutamine, and one molecule of ATP is hydrogenolyzed for each amidation. The protein is Cobyric acid synthase of Herpetosiphon aurantiacus (strain ATCC 23779 / DSM 785 / 114-95).